The primary structure comprises 65 residues: Conotoxin Lt5.1 (65 aa).

The N-terminal stretch at 1–19 (MRCLPVFIILLLLIPSAPS) is a signal peptide. Residues 20–48 (VDAQRKTKDDVPLASFHDNAKRTLKRLWN) constitute a propeptide that is removed on maturation.

This sequence belongs to the conotoxin T superfamily. Post-translationally, contains 2 disulfide bonds that can be either 'C1-C3, C2-C4' or 'C1-C4, C2-C3', since these disulfide connectivities have been observed for conotoxins with cysteine framework V (for examples, see AC P0DQQ7 and AC P81755). In terms of tissue distribution, expressed by the venom duct.

It is found in the secreted. This Conus litteratus (Lettered cone) protein is Conotoxin Lt5.1.